A 432-amino-acid polypeptide reads, in one-letter code: Glutamyl-tRNA reductase (432 aa).

Substrate contacts are provided by residues 49 to 52 (TCNR), Ser109, 114 to 116 (EGQ), and Gln120. The active-site Nucleophile is the Cys50. 198–203 (GAGRMS) lines the NADP(+) pocket.

It belongs to the glutamyl-tRNA reductase family. As to quaternary structure, homodimer.

It carries out the reaction (S)-4-amino-5-oxopentanoate + tRNA(Glu) + NADP(+) = L-glutamyl-tRNA(Glu) + NADPH + H(+). It participates in porphyrin-containing compound metabolism; protoporphyrin-IX biosynthesis; 5-aminolevulinate from L-glutamyl-tRNA(Glu): step 1/2. It functions in the pathway porphyrin-containing compound metabolism; chlorophyll biosynthesis. Its function is as follows. Catalyzes the NADPH-dependent reduction of glutamyl-tRNA(Glu) to glutamate 1-semialdehyde (GSA). This is Glutamyl-tRNA reductase from Synechococcus sp. (strain CC9902).